Reading from the N-terminus, the 367-residue chain is BTB/POZ domain-containing protein Tiwaz (367 aa).

Disordered stretches follow at residues 16–46 (LTVD…PRDL) and 62–87 (SSPT…SSVT). Residues 28–45 (CDMDRERERDVKALEPRD) show a composition bias toward basic and acidic residues. The BTB domain occupies 135–205 (APVHIDVGGT…MRNSRLLIAE (71 aa)). The segment at 240 to 261 (GNYLVAPPTPPARHIKTSPRTS) is disordered.

Functions with the transcription factor TfAP-2 to regulate octopamine neuronal signaling pathways that control behaviors such as male aggression, male mating, and the initiation of feeding. Required for TfAP-2 transcriptional activity in octopaminergic neurons. Functions with TfAP-2 to regulate expression of genes which are involved in promoting octopamine production and secretion from octopaminergic neurons, such as Tbh and Vmat. Octopamine then modulates feeding and male aggression by regulating the expression of the satiation hormone Dsk in insulin-producing cells (IPCs). Functions with octopamine and Dsk as part of a negative feedback loop to prevent overeating; acts with TfAP-2 to regulate octopamine signaling pathways that initiate feeding, then octopamine activates expression of Dsk which inhibits consummatory behavior. May also be involved in negatively regulating nociception in larvae to prevent spontaneous pain and hyperalgesia. This chain is BTB/POZ domain-containing protein Tiwaz, found in Drosophila melanogaster (Fruit fly).